Consider the following 472-residue polypeptide: Argininosuccinate lyase (472 aa).

Belongs to the lyase 1 family. Argininosuccinate lyase subfamily.

It localises to the cytoplasm. The enzyme catalyses 2-(N(omega)-L-arginino)succinate = fumarate + L-arginine. Its pathway is amino-acid biosynthesis; L-arginine biosynthesis; L-arginine from L-ornithine and carbamoyl phosphate: step 3/3. The sequence is that of Argininosuccinate lyase from Rhodococcus opacus (strain B4).